Reading from the N-terminus, the 219-residue chain is MTQDEMKKAAGWAALQYVKKDTIVGVGTGSTVNHFIDALATMKDDIEGAVSSSEASTKKLIELGIEVFDLNSVDLIDVYVDGADEINDRMDMIKGGGAALTREKIVAAVAKRFICIVDNTKQVPILGEFPLPVEVIPMARSYVARELVKLGGDPVYRQGVITDNGNVILDVYNMKILDPKVMETKINAIVGVVTNGLFANRGADVLLVGTPDGVNTITL.

Substrate-binding positions include 28–31 (TGST), 81–84 (DGAD), and 94–97 (KGGG). E103 (proton acceptor) is an active-site residue. K121 is a substrate binding site.

This sequence belongs to the ribose 5-phosphate isomerase family. As to quaternary structure, homodimer.

It catalyses the reaction aldehydo-D-ribose 5-phosphate = D-ribulose 5-phosphate. The protein operates within carbohydrate degradation; pentose phosphate pathway; D-ribose 5-phosphate from D-ribulose 5-phosphate (non-oxidative stage): step 1/1. In terms of biological role, catalyzes the reversible conversion of ribose-5-phosphate to ribulose 5-phosphate. This Shewanella frigidimarina (strain NCIMB 400) protein is Ribose-5-phosphate isomerase A.